Here is a 239-residue protein sequence, read N- to C-terminus: Gamma-lactamase MBL2 (239 aa).

His56, His58, Asp60, His61, His141, and Asp165 together coordinate Zn(2+).

Belongs to the metallo-beta-lactamase superfamily.

Gamma-lactamase; part of the Fusarium detoxification of benzoxazolinone cluster 2 (FDB2) involved in the degradation of benzoxazolinones produced by the host plant. Maize, wheat, and rye produce the 2 benzoxazinone phytoanticipins 2,4-dihy-droxy-7-methoxy-1,4-benzoxazin-3-one (DIMBOA) and 2,4-dihydroxy-1,4-benzoxazin-3-one (DIBOA) that, due to their inherent instability once released, spontaneously degrade to the more stable corresponding benzoxazolinones, 6-methoxy-2-benzoxazolinone (MBOA) and 2-benzoxazolinone (BOA), respectively. The first step in the detoxification of benzoxazolinones involves the hydrolysis of the cyclic ester bond of benzoxazolinones by the FDB1 cluster gamma-lactamase MBL1 to aminophenols. MBL1 is able to convert BOA into 2-aminophenol (2-AP), as well as MBOA into 5-methoxy-2-aminophenol (2-AMP). The FDB2 cluster N-malonyltransferase FDB2/NAT1 then metabolizes aminophenols via N-malonylation to non-toxic malonamic acids. FDB2/NAT1 converts 2-AP into N-(2-hydroxyphenyl) malonamic acid (HPMA) and 2-AMP into N-(2-hydroxy-4-methoxyphenyl) malonamic acid (HMPMA). The duplicated dienlactone hydrolases DLH1 and DLH2 may provide redundant function for hydrolyzing the lactone moiety in the BOA molecule. The roles of the amidases and other enzymes encoded by the 2 FDB clusters have not been identified so far. This chain is Gamma-lactamase MBL2, found in Gibberella moniliformis (strain M3125 / FGSC 7600) (Maize ear and stalk rot fungus).